The chain runs to 667 residues: Single-minded homolog 2 (667 aa).

Residues 1 to 53 enclose the bHLH domain; the sequence is MKEKSKNAAKTRREKENGEFYELAKLLPLPSAITSQLDKASIIRLTTSYLKMR. 2 PAS domains span residues 77–149 and 218–288; these read AKEL…LHHH and PPSA…LVKG. The 44-residue stretch at 292–335 folds into the PAC domain; the sequence is TKYYRLLSKRGGWVWVQSYATVVHNSRSSRPHCIVSVNYVLTEI. The region spanning 336–667 is the Single-minded C-terminal domain; that stretch reads EYKELQLSLE…GASVIITNGR (332 aa). Disordered stretches follow at residues 356 to 389, 409 to 428, and 500 to 520; these read WRTA…YPPQ, ASPP…SESS, and SSSS…RHSL. The short motif at 367–386 is the Nuclear localization signal element; sequence RKLVKPKNTKMKTKLRTNPY. Basic residues predominate over residues 369–381; it reads LVKPKNTKMKTKL. Residues 409–419 show a composition bias toward low complexity; it reads ASPPASAAAPP.

In terms of assembly, efficient DNA binding requires dimerization with another bHLH protein. Heterodimer of SIM2 and ARNT.

The protein resides in the nucleus. In terms of biological role, transcription factor that may be a master gene of CNS development in cooperation with Arnt. It may have pleiotropic effects in the tissues expressed during development. This Homo sapiens (Human) protein is Single-minded homolog 2 (SIM2).